The chain runs to 297 residues: MGNIFHTPVLLDEIINLLEIVYVNDGFIFVDCTLGEGGHSSAVLRKYQNISVIGIERDDIILNRAKEFLVEFKGKVSYFNAWFDDFFSEYSLSSKANFILADLGISMFHYKMSGRGFSFFEDERLDMRLNPGAGGLSAYDIVNTFDKVRLENLIYEFGGEHYSKRIVSSILEYRKIKKIKTSRELQGIISKAYPRIKLKINPATKTFQALRIYVNDELFRLKRSLPLWVGSLSRNGILAIITFHSLEDKIVKEFFKGLSKEQYCILTKKPIIASFEEKRCNNASRSAKLRAIRKLYE.

S-adenosyl-L-methionine contacts are provided by residues 37–39 (GGH), glutamate 56, phenylalanine 87, aspartate 102, and histidine 109.

The protein belongs to the methyltransferase superfamily. RsmH family.

The protein localises to the cytoplasm. The enzyme catalyses cytidine(1402) in 16S rRNA + S-adenosyl-L-methionine = N(4)-methylcytidine(1402) in 16S rRNA + S-adenosyl-L-homocysteine + H(+). Functionally, specifically methylates the N4 position of cytidine in position 1402 (C1402) of 16S rRNA. The polypeptide is Ribosomal RNA small subunit methyltransferase H (Borrelia hermsii (strain HS1 / DAH)).